Here is a 155-residue protein sequence, read N- to C-terminus: Ribosome maturation factor RimP (155 aa).

Belongs to the RimP family.

The protein resides in the cytoplasm. Functionally, required for maturation of 30S ribosomal subunits. The chain is Ribosome maturation factor RimP from Listeria monocytogenes serotype 4b (strain CLIP80459).